Reading from the N-terminus, the 322-residue chain is tRNA-modifying protein YgfZ (322 aa).

Trp182 contacts folate.

The protein belongs to the tRNA-modifying YgfZ family.

The protein localises to the cytoplasm. Functionally, folate-binding protein involved in regulating the level of ATP-DnaA and in the modification of some tRNAs. It is probably a key factor in regulatory networks that act via tRNA modification, such as initiation of chromosomal replication. This Vibrio campbellii (strain ATCC BAA-1116) protein is tRNA-modifying protein YgfZ.